Reading from the N-terminus, the 396-residue chain is S-adenosylmethionine synthase (396 aa).

Histidine 16 contacts ATP. Mg(2+) is bound at residue aspartate 18. Glutamate 44 serves as a coordination point for K(+). L-methionine contacts are provided by glutamate 57 and glutamine 100. The segment at 100-110 (QSKDIALGVDK) is flexible loop. Residues 176 to 178 (DGK), 243 to 244 (RF), aspartate 252, 258 to 259 (RK), alanine 275, and lysine 279 contribute to the ATP site. Aspartate 252 is a binding site for L-methionine. Residue lysine 283 coordinates L-methionine.

It belongs to the AdoMet synthase family. Homotetramer; dimer of dimers. Mg(2+) is required as a cofactor. Requires K(+) as cofactor.

It localises to the cytoplasm. It catalyses the reaction L-methionine + ATP + H2O = S-adenosyl-L-methionine + phosphate + diphosphate. Its pathway is amino-acid biosynthesis; S-adenosyl-L-methionine biosynthesis; S-adenosyl-L-methionine from L-methionine: step 1/1. In terms of biological role, catalyzes the formation of S-adenosylmethionine (AdoMet) from methionine and ATP. The overall synthetic reaction is composed of two sequential steps, AdoMet formation and the subsequent tripolyphosphate hydrolysis which occurs prior to release of AdoMet from the enzyme. This chain is S-adenosylmethionine synthase, found in Lachnoclostridium phytofermentans (strain ATCC 700394 / DSM 18823 / ISDg) (Clostridium phytofermentans).